We begin with the raw amino-acid sequence, 469 residues long: Cyclin-dependent kinase 14 (469 aa).

Residues S24, S78, and S95 each carry the phosphoserine modification. The interval 103-133 (FKSSSAGKESPKVRRHSSPSSPTSPKFGKAD) is disordered. S134 is modified (phosphoserine). The 285-residue stretch at 135–419 (YEKLEKLGEG…AQAALSHEYF (285 aa)) folds into the Protein kinase domain. ATP contacts are provided by residues 141–149 (LGEGSYATV) and K164. The active-site Proton acceptor is D256. Residues 449–469 (ESMRAFGKNNSYGKSLSNSKH) form a disordered region. Polar residues predominate over residues 456 to 469 (KNNSYGKSLSNSKH).

Belongs to the protein kinase superfamily. CMGC Ser/Thr protein kinase family. CDC2/CDKX subfamily. In terms of assembly, found in a complex with LRP6, CCNY and CAPRIN2 during G2/M stage; CAPRIN2 functions as a scaffold for the complex by binding to CCNY via its N terminus and to CDK14 via its C terminus. Interacts with CCNY; CCNY mediates its recruitment to the plasma membrane and promotes phosphorylation of LRP6. Interacts with CCDN3 and CDKN1A. Interacts with SEPT8. Interacts with 14-3-3 proteina YWHAB, YWHAE, YWHAH and YWHAQ. In the adult, widely expressed at low levels except in brain, kidney and testis where expression is high. In the brain, detected in cortex, hippocampus, dentate gyrus, amygdala cortex, parasubiculum and cerebellum. In the embryo, expressed predominantly in the nervous system.

It is found in the cell membrane. The protein resides in the cytoplasm. It localises to the nucleus. It carries out the reaction L-seryl-[protein] + ATP = O-phospho-L-seryl-[protein] + ADP + H(+). It catalyses the reaction L-threonyl-[protein] + ATP = O-phospho-L-threonyl-[protein] + ADP + H(+). Serine/threonine-protein kinase activity is promoted by associated cyclins CCDN3 and CCNY and repressed by CDKN1A. Its function is as follows. Serine/threonine-protein kinase involved in the control of the eukaryotic cell cycle, whose activity is controlled by an associated cyclin. Acts as a cell-cycle regulator of Wnt signaling pathway during G2/M phase by mediating the phosphorylation of LRP6 at 'Ser-1490', leading to the activation of the Wnt signaling pathway. Acts as a regulator of cell cycle progression and cell proliferation via its interaction with CCDN3. Phosphorylates RB1 in vitro, however the relevance of such result remains to be confirmed in vivo. May also play a role in meiosis, neuron differentiation and may indirectly act as a negative regulator of insulin-responsive glucose transport. The polypeptide is Cyclin-dependent kinase 14 (Cdk14) (Mus musculus (Mouse)).